The primary structure comprises 1219 residues: Type IV pilus biogenesis factor PilY1 homolog PD_0502 (1219 aa).

The N-terminal stretch at 1-35 (MVGMSRIILNNLFFFRCVVAVFSAHSLVISGAVHA) is a signal peptide. The segment at 212–234 (GLSTDPLNTEGQPYDPSRHPLNS) is disordered. The Ca(2+) site is built by Gln958, Asn960, Ile962, and Asp964.

It belongs to the PilY1 family.

The protein resides in the fimbrium. In terms of biological role, one of the three PilY1 homologs of X.fastidiosa, which are involved in bacterial twitching motility as component of the filamentous type IV pili (T4P). This Xylella fastidiosa (strain Temecula1 / ATCC 700964) protein is Type IV pilus biogenesis factor PilY1 homolog PD_0502.